A 532-amino-acid polypeptide reads, in one-letter code: ATP synthase subunit alpha (532 aa).

Residue 171–178 (GDRQTGKT) coordinates ATP.

Belongs to the ATPase alpha/beta chains family. F-type ATPases have 2 components, CF(1) - the catalytic core - and CF(0) - the membrane proton channel. CF(1) has five subunits: alpha(3), beta(3), gamma(1), delta(1), epsilon(1). CF(0) has three main subunits: a(1), b(2) and c(9-12). The alpha and beta chains form an alternating ring which encloses part of the gamma chain. CF(1) is attached to CF(0) by a central stalk formed by the gamma and epsilon chains, while a peripheral stalk is formed by the delta and b chains.

The protein localises to the cell membrane. It catalyses the reaction ATP + H2O + 4 H(+)(in) = ADP + phosphate + 5 H(+)(out). In terms of biological role, produces ATP from ADP in the presence of a proton gradient across the membrane. The alpha chain is a regulatory subunit. In Amoebophilus asiaticus (strain 5a2), this protein is ATP synthase subunit alpha.